Consider the following 362-residue polypeptide: MSKRAYNFNAGPAALPLEVLERAQAEFVDYQHTGMSIMEMSHRGAVYEAVHNEAQARLLALLGNPTGYKVLFIQGGASTQFAMIPMNFLKEGQTANYVMTGSWASKALKEAKLIGDTHVAASSEASNYMTLPKLQEIQLQDNAAYLHLTSNETIEGAQFKAFPDTGSVPLIGDMSSDILSRPFDLNQFGLVYAGAQKNLGPSGVTVVIVREDLVAESPKHLPTMLRYDTYVKNNSLYNTPPSFGIYMVNEVLKWIEERGGLEGVQQANRKKASLIYDAIDQSGGFYRGCVDVDSRSDMNITFRLASEELEKEFVKASEQEGFVGLKGHRSVGGLRASIYNAVPYESCEALVQFMEHFKRSRG.

Arg43 contacts L-glutamate. Residues Ala77–Ser78, Trp103, Thr153, Asp173, and Gln196 each bind pyridoxal 5'-phosphate. Position 197 is an N6-(pyridoxal phosphate)lysine (Lys197). Residue Asn238 to Thr239 participates in pyridoxal 5'-phosphate binding.

It belongs to the class-V pyridoxal-phosphate-dependent aminotransferase family. SerC subfamily. Homodimer. Pyridoxal 5'-phosphate is required as a cofactor.

It is found in the cytoplasm. The catalysed reaction is O-phospho-L-serine + 2-oxoglutarate = 3-phosphooxypyruvate + L-glutamate. It catalyses the reaction 4-(phosphooxy)-L-threonine + 2-oxoglutarate = (R)-3-hydroxy-2-oxo-4-phosphooxybutanoate + L-glutamate. Its pathway is amino-acid biosynthesis; L-serine biosynthesis; L-serine from 3-phospho-D-glycerate: step 2/3. It functions in the pathway cofactor biosynthesis; pyridoxine 5'-phosphate biosynthesis; pyridoxine 5'-phosphate from D-erythrose 4-phosphate: step 3/5. Catalyzes the reversible conversion of 3-phosphohydroxypyruvate to phosphoserine and of 3-hydroxy-2-oxo-4-phosphonooxybutanoate to phosphohydroxythreonine. This chain is Phosphoserine aminotransferase (serC), found in Niallia circulans (Bacillus circulans).